The primary structure comprises 467 residues: Venom prothrombin activator omicarin-C catalytic subunit (467 aa).

Positions 1-20 (MAPQLLLCLILTFLWSLPEA) are cleaved as a signal peptide. A propeptide spanning residues 21 to 40 (ESNVFLKSKVANRFLQRTKR) is cleaved from the precursor. In terms of domain architecture, Gla spans 41 to 86 (ANSLFEEFRSGNIERECIEERCSKEEAREVFEDDEKTETFWNVYVD). 4-carboxyglutamate occurs at positions 46, 47, 54, 56, 59, 60, 65, 66, 69, 72, and 75. A disulfide bridge links C57 with C62. Positions 86–122 (DGDQCSSNPCHYRGTCKDGIGSYTCTCLFGYEGKNCE) constitute an EGF-like 1; calcium-binding domain. Intrachain disulfides connect C90–C101, C95–C110, C112–C121, C129–C140, C136–C149, C151–C164, C172–C329, C216–C221, C236–C252, C377–C391, and C402–C430. The O-linked (Hex...) serine glycan is linked to S92. An EGF-like 2 domain is found at 129 to 164 (CRVDNGNCWHFCKPVQNDIQCSCAEGYLLGEDGHSC). Residues 182–209 (REASLPDFVQSQNATLLKKSDNPSPDIR) constitute a propeptide, activation peptide. One can recognise a Peptidase S1 domain in the interval 210-454 (IVNGMDCKLG…FILWIKRIMR (245 aa)). H251 functions as the Charge relay system in the catalytic mechanism. N254 carries an N-linked (GlcNAc...) asparagine glycan. Catalysis depends on D309, which acts as the Charge relay system. S406 functions as the Charge relay system in the catalytic mechanism.

This sequence belongs to the peptidase S1 family. Snake venom subfamily. Heterodimer of a light and a heavy chains; disulfide-linked. Is associated with omicarin-C non-catalytic subunit (AC Q58L90) in a non-covalent manner. Gamma-carboxyglutamate residues are formed by vitamin K dependent carboxylation. These residues are essential for the binding of calcium. As to expression, expressed by the venom gland.

It localises to the secreted. The enzyme catalyses Selective cleavage of Arg-|-Thr and then Arg-|-Ile bonds in prothrombin to form thrombin.. Its activity is regulated as follows. Activated by calcium and negatively charged phospholipids. Functionally, snake prothrombin activator that attacks the hemostatic system of prey. This catalytic subunit is functionally similar to blood coagulation factor Xa. It requires a non-catalytic subunit present in the venom, which is similar to coagulation factor Va, to be fully active. The sequence is that of Venom prothrombin activator omicarin-C catalytic subunit from Oxyuranus microlepidotus (Inland taipan).